The primary structure comprises 550 residues: Methionine--tRNA ligase (550 aa).

The short motif at 13–23 is the 'HIGH' region element; sequence PYANGPLHFGH. C145, C148, C158, and C161 together coordinate Zn(2+). The 'KMSKS' region motif lies at 331–335; it reads QFSKS. K334 contacts ATP.

It belongs to the class-I aminoacyl-tRNA synthetase family. MetG type 1 subfamily. In terms of assembly, monomer. Requires Zn(2+) as cofactor.

It is found in the cytoplasm. It carries out the reaction tRNA(Met) + L-methionine + ATP = L-methionyl-tRNA(Met) + AMP + diphosphate. Its function is as follows. Is required not only for elongation of protein synthesis but also for the initiation of all mRNA translation through initiator tRNA(fMet) aminoacylation. In Chlamydia muridarum (strain MoPn / Nigg), this protein is Methionine--tRNA ligase (metG).